The chain runs to 141 residues: Large ribosomal subunit protein uL16 (141 aa).

The disordered stretch occupies residues 1–23 (MLMPKRTKYRKQMKGRNRGKAHR).

Belongs to the universal ribosomal protein uL16 family. Part of the 50S ribosomal subunit.

Its function is as follows. Binds 23S rRNA and is also seen to make contacts with the A and possibly P site tRNAs. The sequence is that of Large ribosomal subunit protein uL16 from Helicobacter pylori (strain J99 / ATCC 700824) (Campylobacter pylori J99).